A 386-amino-acid polypeptide reads, in one-letter code: Skeletal aspartic acid-rich protein 1 (386 aa).

The signal sequence occupies residues 1–24 (MAFVSCFHLRLLFLCLALFMAAEC). Disordered regions lie at residues 33–145 (VDSD…PFSL) and 244–291 (EVTD…DCPH). The span at 63-107 (YDASDDNDNDNDDDDNNDNDNDNDDDNDVDRDNDNDDDDFDDSND) shows a compositional bias: acidic residues. 2 stretches are compositionally biased toward basic and acidic residues: residues 133–142 (HSVESFEDRP) and 244–265 (EVTDEERKSQNKPAVCKDKDTP). Residues 266 to 288 (DTDSDPDDSSDNANDGDDDDDDD) are compositionally biased toward acidic residues.

Component of the acid-insoluble and acid-soluble organic matrix of the aragonitic skeleton (at protein level).

The protein resides in the secreted. In Acropora millepora (Staghorn coral), this protein is Skeletal aspartic acid-rich protein 1.